The sequence spans 270 residues: Non-homologous end joining protein Ku (270 aa).

One can recognise a Ku domain in the interval 10-194 (SLGLLNIGIK…NYPIQKQELT (185 aa)).

It belongs to the prokaryotic Ku family. As to quaternary structure, homodimer. Interacts with LigD.

In terms of biological role, with LigD forms a non-homologous end joining (NHEJ) DNA repair enzyme, which repairs dsDNA breaks with reduced fidelity. Binds linear dsDNA with 5'- and 3'- overhangs but not closed circular dsDNA nor ssDNA. Recruits and stimulates the ligase activity of LigD. The polypeptide is Non-homologous end joining protein Ku (Bacillus thuringiensis subsp. konkukian (strain 97-27)).